An 84-amino-acid chain; its full sequence is Large ribosomal subunit protein bL27 (84 aa).

A disordered region spans residues 1-24 (MAHKKAGGSSRNGRDSKGQRLGCK).

Belongs to the bacterial ribosomal protein bL27 family.

This is Large ribosomal subunit protein bL27 from Pelobacter propionicus (strain DSM 2379 / NBRC 103807 / OttBd1).